We begin with the raw amino-acid sequence, 125 residues long: Large ribosomal subunit protein bL12 (125 aa).

The protein belongs to the bacterial ribosomal protein bL12 family. In terms of assembly, homodimer. Part of the ribosomal stalk of the 50S ribosomal subunit. Forms a multimeric L10(L12)X complex, where L10 forms an elongated spine to which 2 to 4 L12 dimers bind in a sequential fashion. Binds GTP-bound translation factors.

Functionally, forms part of the ribosomal stalk which helps the ribosome interact with GTP-bound translation factors. Is thus essential for accurate translation. This Erythrobacter litoralis (strain HTCC2594) protein is Large ribosomal subunit protein bL12.